Consider the following 197-residue polypeptide: ATP-dependent Clp protease proteolytic subunit 3 (197 aa).

Ser-96 functions as the Nucleophile in the catalytic mechanism. His-121 is an active-site residue.

Belongs to the peptidase S14 family. In terms of assembly, fourteen ClpP subunits assemble into 2 heptameric rings which stack back to back to give a disk-like structure with a central cavity, resembling the structure of eukaryotic proteasomes.

It is found in the cytoplasm. It carries out the reaction Hydrolysis of proteins to small peptides in the presence of ATP and magnesium. alpha-casein is the usual test substrate. In the absence of ATP, only oligopeptides shorter than five residues are hydrolyzed (such as succinyl-Leu-Tyr-|-NHMec, and Leu-Tyr-Leu-|-Tyr-Trp, in which cleavage of the -Tyr-|-Leu- and -Tyr-|-Trp bonds also occurs).. Its function is as follows. Cleaves peptides in various proteins in a process that requires ATP hydrolysis. Has a chymotrypsin-like activity. Plays a major role in the degradation of misfolded proteins. This Prochlorococcus marinus (strain MIT 9313) protein is ATP-dependent Clp protease proteolytic subunit 3.